The sequence spans 313 residues: Homeobox protein knotted-1-like 2 (313 aa).

A disordered region spans residues 13 to 40 (DPSSAAASSPNPSFSPGGGGGGGVGGGE). A compositionally biased stretch (low complexity) spans 14–27 (PSSAAASSPNPSFS). A compositionally biased stretch (gly residues) spans 28–38 (PGGGGGGGVGG). The 21-residue stretch at 205–225 (ELKNELKQGYKEKLVDIREEI) folds into the ELK domain. Residues 226-289 (LRKRRAGKLP…NQRKRNWHSN (64 aa)) constitute a DNA-binding region (homeobox; TALE-type). Residues 282–313 (RKRNWHSNPASSGEKTKKKRNVTGDGGAEQSW) are disordered.

Belongs to the TALE/KNOX homeobox family. As to expression, isoform 1 is expressed in roots, leaf blades, leaf sheaths and flowers. Isoform 2 is expressed in leaf blades, leaf sheaths and flowers.

The protein localises to the nucleus. The polypeptide is Homeobox protein knotted-1-like 2 (HOS58) (Oryza sativa subsp. japonica (Rice)).